The primary structure comprises 490 residues: uncharacterized protein (490 aa).

A signal peptide spans 1-19; it reads MSITSVSLYVYLICAGGHA.

The protein belongs to the mimivirus L137 family.

This is an uncharacterized protein from Acanthamoeba polyphaga (Amoeba).